A 187-amino-acid polypeptide reads, in one-letter code: Elongation factor P (187 aa).

Belongs to the elongation factor P family.

The protein localises to the cytoplasm. It participates in protein biosynthesis; polypeptide chain elongation. Involved in peptide bond synthesis. Stimulates efficient translation and peptide-bond synthesis on native or reconstituted 70S ribosomes in vitro. Probably functions indirectly by altering the affinity of the ribosome for aminoacyl-tRNA, thus increasing their reactivity as acceptors for peptidyl transferase. The chain is Elongation factor P from Desulforapulum autotrophicum (strain ATCC 43914 / DSM 3382 / VKM B-1955 / HRM2) (Desulfobacterium autotrophicum).